We begin with the raw amino-acid sequence, 949 residues long: Phosphocholine transferase AnkX (949 aa).

The region spanning 155–289 is the Fido domain; the sequence is LNPEQIPDLA…IFNTVEIIEQ (135 aa). ANK repeat units lie at residues 391–420, 424–453, 464–494, 498–527, 554–583, 588–617, 658–687, 691–720, 725–767, and 771–800; these read VGKTPAHLAVISGNMAMLDELIAKKADLSL, DGKTALHYAAECGNMQIMGKILKVVLSQED, HGKTAFHYAAEFGTPELISALTTTEVIQINE, SGSSAITLAYKNHKLKIFDELLNSGADISD, LNKEAFRIAISLGSVSLVKKFLRAGVDIDI, DKATPLMLSINSGNPKLVSYLLKKGANTRL, NGNPPLYNAVVVNDLKMATILLEMGARVDF, LGNNILHSAMRRCDLPIILDIVKKDSTLLH, ERRN…DLNK, and KGKTILDIALSKQYFHLCVKLMKAGAHTNI.

The protein resides in the secreted. It localises to the host cytoplasm. The catalysed reaction is [Rab1 protein]-L-serine + CDP-choline = [Rab1 protein]-O-phosphocholine-L-serine + CMP + H(+). Its function is as follows. Virulence effector that plays a role in hijacking the host vesicular trafficking by recruiting the small guanosine triphosphatase (GTPase) Rab1 to the cytosolic face of the Legionella-containing vacuole (LCVs). Acts as a phosphocholine transferase by mediating the addition of phosphocholine to Ser residues of host RAB1 (RAB1A, RAB1B or RAB1C) and RAB35, leading to displacement of GDP dissociation inhibitors (GDI). Phosphocholination of target proteins also impairs accessibility to GTPase effector LepB. Can act on both GDP-bound and GTP-bound Rab proteins. This Legionella pneumophila subsp. pneumophila (strain Philadelphia 1 / ATCC 33152 / DSM 7513) protein is Phosphocholine transferase AnkX (ankX).